A 600-amino-acid chain; its full sequence is ATP-dependent RNA helicase DDX55 (600 aa).

Positions 9 to 37 (WESLQVPLHPRVLGALRELGFPHMTPVQS) match the Q motif motif. Positions 40 to 223 (IPLFMKNKDV…RAGLRNPVRI (184 aa)) constitute a Helicase ATP-binding domain. 53–60 (AVTGSGKT) contributes to the ATP binding site. The DEAD box motif lies at 171 to 174 (DEAD). Residues 254–402 (KFNQLVHFLR…EMSLQRNTID (149 aa)) form the Helicase C-terminal domain. Basic and acidic residues predominate over residues 499 to 513 (LEQKRKERSENEGRK). The tract at residues 499 to 551 (LEQKRKERSENEGRKKFIKNKAWSKQKAKKERKKKMNAKRKKDEGSDIDDEDM) is disordered. Residues 514–538 (KFIKNKAWSKQKAKKERKKKMNAKR) are compositionally biased toward basic residues. The tract at residues 533-562 (KMNAKRKKDEGSDIDDEDMEELLNDTRLLK) is important for nuclear localization. 2 positions are modified to phosphoserine: S544 and S594.

It belongs to the DEAD box helicase family. DDX55/SPB4 subfamily. In terms of assembly, interacts with 28S rRNA. Interacts with double-stranded RNA substrates in vitro; the interaction stimulates ATPase activity.

Its subcellular location is the nucleus. It is found in the nucleoplasm. It carries out the reaction ATP + H2O = ADP + phosphate + H(+). Functionally, probable ATP-binding RNA helicase. Has ATPase activity and is involved in the maturation of precursor large subunit rRNAs. In Mus musculus (Mouse), this protein is ATP-dependent RNA helicase DDX55 (Ddx55).